A 180-amino-acid polypeptide reads, in one-letter code: Large ribosomal subunit protein uL5 (180 aa).

This sequence belongs to the universal ribosomal protein uL5 family. Part of the 50S ribosomal subunit; part of the 5S rRNA/L5/L18/L25 subcomplex. Contacts the 5S rRNA and the P site tRNA. Forms a bridge to the 30S subunit in the 70S ribosome.

In terms of biological role, this is one of the proteins that bind and probably mediate the attachment of the 5S RNA into the large ribosomal subunit, where it forms part of the central protuberance. In the 70S ribosome it contacts protein S13 of the 30S subunit (bridge B1b), connecting the 2 subunits; this bridge is implicated in subunit movement. Contacts the P site tRNA; the 5S rRNA and some of its associated proteins might help stabilize positioning of ribosome-bound tRNAs. The polypeptide is Large ribosomal subunit protein uL5 (Roseiflexus sp. (strain RS-1)).